We begin with the raw amino-acid sequence, 206 residues long: Dephospho-CoA kinase (206 aa).

A DPCK domain is found at 4 to 200 (IVALTGGIGS…AHYLQLASQF (197 aa)). 12-17 (GSGKST) contacts ATP.

The protein belongs to the CoaE family.

Its subcellular location is the cytoplasm. It carries out the reaction 3'-dephospho-CoA + ATP = ADP + CoA + H(+). Its pathway is cofactor biosynthesis; coenzyme A biosynthesis; CoA from (R)-pantothenate: step 5/5. Functionally, catalyzes the phosphorylation of the 3'-hydroxyl group of dephosphocoenzyme A to form coenzyme A. This chain is Dephospho-CoA kinase, found in Shigella flexneri.